We begin with the raw amino-acid sequence, 118 residues long: Beta-2-microglobulin (118 aa).

Positions 1-20 (MARFVVLVLLGLLYLSHLDA) are cleaved as a signal peptide. Residues 25–113 (PKVQVYSRHP…TTLSEPKVVK (89 aa)) form the Ig-like C1-type domain. Residues C45 and C99 are joined by a disulfide bond.

It belongs to the beta-2-microglobulin family. Heterodimer of an alpha chain and a beta chain. Beta-2-microglobulin is the beta-chain of major histocompatibility complex class I molecules.

The protein localises to the secreted. In terms of biological role, component of the class I major histocompatibility complex (MHC). Involved in the presentation of peptide antigens to the immune system. The sequence is that of Beta-2-microglobulin (B2M) from Felis catus (Cat).